A 655-amino-acid polypeptide reads, in one-letter code: MKSLLFSILLIYLIQLVRSEECTDKHIHCFFWSQEGECEVNPRWMKKHCQKACGTCSLTSPTPLTRQQDVPTARTFDDQQDRQFLPSRPSSIPEGCNSVMTVEAETRRIFSSGQLTARFRQQMCAEEQVAPDCSINQCFHKKYRSMDGTCNNLQNPVKGAAFTAFTRLMPAAYDDGFNTLVSASRRNRPNPREVSVFLLSSERSLPGHVNSLLMLFGQFVSHDITSNAAQNFCGCQNSGPMCASIFAPPSDRSRRCIPFTRSFPICGTGQFGRVREQLNMNTAAIDASLIYGSEAITARSLRFAAMLRTSMIGGRMFPPNTNPGSLTAGDGRAILFVGLAALHTSFLRLHNNVAARLQNMNRHWNADRIFQESRKIVGGIVQVITYQEFVPELIGDASKTILGAYNGYNPNVEIGVLNEFAAGAYRLHGMIQETYPLVNSQFQEVNRYRFIDGVNNINHVLNNIDAIYRGMMTVPVRSPQRLTTSVTERLFGGSVDMAAVNIQRGRDHGLRSYNDYRRFCNLRPITSFNDWPEVPDENVRQRIGQLYRTPDDLDFYVGGILEQPAAGSLLGATFACVIGKQFERLRDGDRFYYENPGVFTSPQLAELKRTTLSWVLCQTGDNMVRVGRRAFDIENGSRAVPCSSITGLNLEAWRE.

Positions 1-19 (MKSLLFSILLIYLIQLVRS) are cleaved as a signal peptide. A ShKT domain is found at 22–56 (CTDKHIHCFFWSQEGECEVNPRWMKKHCQKACGTC). 4 cysteine pairs are disulfide-bonded: Cys22–Cys56, Cys29–Cys49, Cys38–Cys53, and Cys133–Cys150. His222 (proton acceptor) is an active-site residue. His428 contributes to the heme b binding site. 2 disulfide bridges follow: Cys520/Cys576 and Cys617/Cys642.

It belongs to the peroxidase family. XPO subfamily. Heme b serves as cofactor. In terms of tissue distribution, exclusively expressed in hypodermis.

It catalyses the reaction 2 a phenolic donor + H2O2 = 2 a phenolic radical donor + 2 H2O. Its function is as follows. Involved in hypodermal immune response against some types of bacterial infection. Probably utilizes H(2)O(2) produced by the NADPH oxidase bli-3. May play a role in cuticule biosynthesis. This is Peroxidase skpo-1 from Caenorhabditis elegans.